A 193-amino-acid chain; its full sequence is 21 kDa protein (193 aa).

Residues 1-22 form the signal peptide; the sequence is MKLSKSTLVFSALLVILAAASA.

The protein is 21 kDa protein of Daucus carota (Wild carrot).